The chain runs to 245 residues: Orotidine 5'-phosphate decarboxylase (245 aa).

Substrate-binding positions include aspartate 22, lysine 44, 71 to 80 (DLKFHDIPNT), threonine 131, arginine 192, glutamine 201, glycine 221, and arginine 222. Lysine 73 acts as the Proton donor in catalysis.

Belongs to the OMP decarboxylase family. Type 1 subfamily. In terms of assembly, homodimer.

It carries out the reaction orotidine 5'-phosphate + H(+) = UMP + CO2. It functions in the pathway pyrimidine metabolism; UMP biosynthesis via de novo pathway; UMP from orotate: step 2/2. In terms of biological role, catalyzes the decarboxylation of orotidine 5'-monophosphate (OMP) to uridine 5'-monophosphate (UMP). The sequence is that of Orotidine 5'-phosphate decarboxylase from Shigella dysenteriae serotype 1 (strain Sd197).